Reading from the N-terminus, the 888-residue chain is Alanine--tRNA ligase (888 aa).

Residues H564, H568, C676, and H680 each contribute to the Zn(2+) site.

The protein belongs to the class-II aminoacyl-tRNA synthetase family. Requires Zn(2+) as cofactor.

Its subcellular location is the cytoplasm. It catalyses the reaction tRNA(Ala) + L-alanine + ATP = L-alanyl-tRNA(Ala) + AMP + diphosphate. In terms of biological role, catalyzes the attachment of alanine to tRNA(Ala) in a two-step reaction: alanine is first activated by ATP to form Ala-AMP and then transferred to the acceptor end of tRNA(Ala). Also edits incorrectly charged Ser-tRNA(Ala) and Gly-tRNA(Ala) via its editing domain. The sequence is that of Alanine--tRNA ligase from Mesorhizobium japonicum (strain LMG 29417 / CECT 9101 / MAFF 303099) (Mesorhizobium loti (strain MAFF 303099)).